A 508-amino-acid polypeptide reads, in one-letter code: UTP--glucose-1-phosphate uridylyltransferase (508 aa).

Position 2 is an N-acetylserine (S2). Phosphoserine is present on residues S2 and S13. Residues 113–116 (LNGG), K127, Q190, and G222 contribute to the UTP site. Residue 115–116 (GG) coordinates substrate. K127 provides a ligand contact to Mg(2+). Substrate is bound by residues H223, 251-253 (NID), and N330. D253 serves as a coordination point for UTP. D253 is a binding site for Mg(2+). K396 contacts UTP. The active site involves K396. Position 426 is a phosphothreonine (T426). A Phosphoserine modification is found at S434. Position 438 is an N6-acetyllysine (K438). Phosphoserine occurs at positions 448 and 461. The interval 457-508 (HLTVSGDVTFGKNVSLKGTVIIIANHGDRIDIPPGAVLENKIVSGNLRILDH) is oligomerization. The tract at residues 502-503 (NL) is critical for end-to-end subunit interaction.

The protein belongs to the UDPGP type 1 family. Homooctamer. Highly expressed in various brain regions. Expressed in amygdala, anterior cingulate cortex, caudate, cerebellar hemisphere, cerebellum, cortex, frontal cortex, hippocampus, hypothalamus, nucleus accumbens, putamen, spinal cord and substantia nigra. Also widely expressed among other tissues, including liver, heart, placenta, lung, kidney, pancreas and skeletal muscle.

It is found in the cytoplasm. It catalyses the reaction alpha-D-glucose 1-phosphate + UTP + H(+) = UDP-alpha-D-glucose + diphosphate. Its pathway is glycan biosynthesis; glycogen biosynthesis. Functionally, UTP--glucose-1-phosphate uridylyltransferase catalyzing the conversion of glucose-1-phosphate into UDP-glucose, a crucial precursor for the production of glycogen. This chain is UTP--glucose-1-phosphate uridylyltransferase, found in Homo sapiens (Human).